Reading from the N-terminus, the 449-residue chain is MSDDEDMMYDDDEYFDDDEDQDQNDSESEGVEIENQYYNSKGLIDESIPDAIKSYEKVVDLENGEKGEWGFKALKKITKLYFRIGDFDNMLESFKKFLPYTKSSASSNYIEKGINSVLDMVSSSNTIELDMIQKVFDLTLKSLLDTKNERVWFRTNLKLAKLLFEKAEYGRLAKILRDLHKSCELEDGTDDQKKGSQLVDIYALEIQMYTETKNNKKLKDLYKKALEIKSAIPHPRIMGIIRECGGKMHMAEKEWEKAHTDFFEAFKNYDEAGNSRRIQCLKYLVLACMLMLSTINPFDSTEAKPYKNDPDILAMTNLVMAYEKNDIYAFEKILKDNRKTIMDDPFIRMYIEDLLRNIRTQVLLKLLKPYTRIRISFISKELNIPSSDVESLLVSLILDNKIRGSIDQVNQQLELDTAKSSAYWKYTSIHKWANQIGQLNGGINNKLVS.

Residues 1 to 32 (MSDDEDMMYDDDEYFDDDEDQDQNDSESEGVE) form a disordered region. The PCI domain occupies 251–420 (AEKEWEKAHT…QQLELDTAKS (170 aa)).

This sequence belongs to the CSN2 family. In terms of assembly, component of the CSN complex. The holocomplex is comprised of 8 subunits csn1-8. In the complex, it probably interacts directly with csn1, csn3, csn5, csn6, csn7 and csn8.

It localises to the cytoplasm. The protein localises to the nucleus. Its function is as follows. Essential component of the COP9 signalosome complex (CSN), a complex involved in various cellular and developmental processes. The CSN complex is an essential regulator of the ubiquitin (Ubl) conjugation pathway by mediating the deneddylation of the cullin subunits of E3 ligase complexes, leading to modify the Ubl ligase activity. The sequence is that of COP9 signalosome complex subunit 2 (csn2) from Dictyostelium discoideum (Social amoeba).